Reading from the N-terminus, the 488-residue chain is GTPase Der (488 aa).

EngA-type G domains are found at residues 3–166 and 199–372; these read PVVA…AEAM and IKLA…DSAT. Residues 9 to 16, 56 to 60, 118 to 121, 205 to 212, 252 to 256, and 317 to 320 contribute to the GTP site; these read GRPNVGKS, DTGGI, NKID, GKPNVGKS, DTAGV, and NKWD. Positions 373-457 constitute a KH-like domain; it reads RRVSTSMLTR…PIQLRFQEGD (85 aa).

This sequence belongs to the TRAFAC class TrmE-Era-EngA-EngB-Septin-like GTPase superfamily. EngA (Der) GTPase family. Associates with the 50S ribosomal subunit.

In terms of biological role, GTPase that plays an essential role in the late steps of ribosome biogenesis. The protein is GTPase Der of Shewanella sp. (strain ANA-3).